The sequence spans 79 residues: Sec-independent protein translocase protein TatA (79 aa).

Residues 1–21 form a helical membrane-spanning segment; the sequence is MGGFTSIWHWVIVLLVIVLLF. Positions 48 to 79 are disordered; the sequence is EEEAKNEPKTLDAQATQTKAHESSEIKSKQES. Basic and acidic residues predominate over residues 66-79; the sequence is KAHESSEIKSKQES.

The protein belongs to the TatA/E family. The Tat system comprises two distinct complexes: a TatABC complex, containing multiple copies of TatA, TatB and TatC subunits, and a separate TatA complex, containing only TatA subunits. Substrates initially bind to the TatABC complex, which probably triggers association of the separate TatA complex to form the active translocon.

It localises to the cell inner membrane. Part of the twin-arginine translocation (Tat) system that transports large folded proteins containing a characteristic twin-arginine motif in their signal peptide across membranes. TatA could form the protein-conducting channel of the Tat system. The chain is Sec-independent protein translocase protein TatA from Helicobacter pylori (strain P12).